Consider the following 567-residue polypeptide: Urease subunit alpha (567 aa).

A Urease domain is found at glycine 129 to phenylalanine 567. Histidine 134, histidine 136, and lysine 217 together coordinate Ni(2+). Lysine 217 is modified (N6-carboxylysine). Histidine 219 contacts substrate. 2 residues coordinate Ni(2+): histidine 246 and histidine 272. Histidine 320 functions as the Proton donor in the catalytic mechanism. Aspartate 360 is a Ni(2+) binding site.

The protein belongs to the metallo-dependent hydrolases superfamily. Urease alpha subunit family. As to quaternary structure, heterotrimer of UreA (gamma), UreB (beta) and UreC (alpha) subunits. Three heterotrimers associate to form the active enzyme. The cofactor is Ni cation. Post-translationally, carboxylation allows a single lysine to coordinate two nickel ions.

It is found in the cytoplasm. It carries out the reaction urea + 2 H2O + H(+) = hydrogencarbonate + 2 NH4(+). The protein operates within nitrogen metabolism; urea degradation; CO(2) and NH(3) from urea (urease route): step 1/1. The protein is Urease subunit alpha of Pseudomonas putida (strain W619).